A 418-amino-acid polypeptide reads, in one-letter code: Voltage-gated ClC-type chloride channel ClcB (418 aa).

A run of 10 helical transmembrane segments spans residues 5–25 (LLIA…FRHA), 54–74 (LLTP…WQKF), 146–166 (LWIA…PLAG), 168–188 (LFIA…PVII), 222–242 (ALII…LTLM), 258–278 (WQLA…PAVW), 291–311 (APPL…AVLA), 316–336 (GAPG…GMLY), 352–372 (LLLG…APIM), and 380–400 (MTGE…ASVI).

This sequence belongs to the chloride channel (TC 2.A.49) family. ClcB subfamily.

The protein localises to the cell inner membrane. Probably acts as an electrical shunt for an outwardly-directed proton pump that is linked to amino acid decarboxylation, as part of the extreme acid resistance (XAR) response. This chain is Voltage-gated ClC-type chloride channel ClcB, found in Escherichia coli O127:H6 (strain E2348/69 / EPEC).